The chain runs to 181 residues: MNSSWRVVVFLGLVILCHSRRARACNGGYEMIVHSIENCAGEGQIVTIDPKSTVTLMEDCKVKSKATARTVGFKTAMMDVTITKNGLPVLKETVDICANLEEASGNKEAAEIITMFGVPDHCPVAASEIRTDESQTYSLEKYKQHLLVAQGRSIIDVLVKHDKGESCFKIDMEVTSPNLIG.

The first 24 residues, 1–24 (MNSSWRVVVFLGLVILCHSRRARA), serve as a signal peptide directing secretion.

Salivary gland (at protein level). As to expression, (Microbial infection) Detected with Plasmodium berghei sporozoites isolated from the saliva of infected Anopheles gambiae mosquitoes (at protein level).

It localises to the secreted. Decreases host neutrophil chemotaxis induced by N-formylmethionine-leucyl-phenylalanine (fMLP). In terms of biological role, (Microbial infection) Interacts with the surface of Plasmodium berghei sporozoites. Enhances sporozoite gliding activity. Enhances host hepatocyte traversal by sporozoites. The chain is Sporozoite-associated mosquito saliva protein 1 from Anopheles gambiae (African malaria mosquito).